The chain runs to 638 residues: Asparagine--tRNA ligase, cytoplasmic 2 (638 aa).

Basic and acidic residues predominate over residues 1 to 16 (MESHGKTHQKEHDNDL). 2 disordered regions span residues 1–23 (MESH…PITL) and 62–87 (VKKN…DQAH).

Belongs to the class-II aminoacyl-tRNA synthetase family.

It is found in the cytoplasm. It localises to the cytosol. It catalyses the reaction tRNA(Asn) + L-asparagine + ATP = L-asparaginyl-tRNA(Asn) + AMP + diphosphate + H(+). In Arabidopsis thaliana (Mouse-ear cress), this protein is Asparagine--tRNA ligase, cytoplasmic 2.